We begin with the raw amino-acid sequence, 423 residues long: Phosphoribosylamine--glycine ligase (423 aa).

An ATP-grasp domain is found at 107–312 (KDLCARYGIP…LLPLLYAAAT (206 aa)). 133–193 (IREEGAPIVI…EAYLDGEEAS (61 aa)) provides a ligand contact to ATP. Mg(2+) is bound by residues glutamate 282 and asparagine 284.

Belongs to the GARS family. It depends on Mg(2+) as a cofactor. Mn(2+) is required as a cofactor.

It carries out the reaction 5-phospho-beta-D-ribosylamine + glycine + ATP = N(1)-(5-phospho-beta-D-ribosyl)glycinamide + ADP + phosphate + H(+). Its pathway is purine metabolism; IMP biosynthesis via de novo pathway; N(1)-(5-phospho-D-ribosyl)glycinamide from 5-phospho-alpha-D-ribose 1-diphosphate: step 2/2. This chain is Phosphoribosylamine--glycine ligase, found in Rhizobium meliloti (strain 1021) (Ensifer meliloti).